We begin with the raw amino-acid sequence, 468 residues long: Microtubule-associated tyrosine carboxypeptidase 1 (468 aa).

A compositionally biased stretch (polar residues) spans 1-10 (MVLDSGTQVY). Disordered regions lie at residues 1–39 (MVLD…PPLY) and 77–112 (MKRS…TLRP). H277 is a Zn(2+) binding site. E278 functions as the Nucleophile in the catalytic mechanism. Zn(2+) is bound by residues H282 and E313.

The protein belongs to the peptidase MATCAP family. Requires Zn(2+) as cofactor.

Its subcellular location is the cytoplasm. The protein resides in the cytoskeleton. It carries out the reaction C-terminal L-alpha-aminoacyl-L-glutamyl-L-glutamyl-L-tyrosyl-[tubulin] + H2O = C-terminal L-alpha-aminoacyl-L-glutamyl-L-glutamyl-[tubulin] + L-tyrosine. The catalysed reaction is C-terminal L-alpha-aminoacyl-L-glutamyl-L-glutamyl-L-phenylalanyl-[tubulin] + H2O = C-terminal L-alpha-aminoacyl-L-glutamyl-L-glutamyl-[tubulin] + L-phenylalanine. Functionally, tyrosine carboxypeptidase that removes the C-terminal tyrosine residue of alpha-tubulin, thereby regulating microtubule dynamics and function. Also able to remove the C-terminal phenylalanine residue of alpha-tubulin TUBA8. Recognizes adjacent tubulin dimers along the same protofilament. The sequence is that of Microtubule-associated tyrosine carboxypeptidase 1 from Rattus norvegicus (Rat).